A 127-amino-acid chain; its full sequence is V-type proton ATPase subunit F (127 aa).

The protein belongs to the V-ATPase F subunit family. In terms of assembly, V-ATPase is a heteromultimeric enzyme made up of two complexes: the ATP-hydrolytic V1 complex and the proton translocation V0 complex. The V1 complex consists of three catalytic AB heterodimers that form a heterohexamer, three peripheral stalks each consisting of EG heterodimers, one central rotor including subunits D and F, and the regulatory subunits C and H. The proton translocation complex V0 consists of the proton transport subunit a, a ring of proteolipid subunits c9c'', rotary subunit d, subunits e and f, and the accessory subunits VhaAC45 and ATP6AP2.

Functionally, subunit of the V1 complex of vacuolar(H+)-ATPase (V-ATPase), a multisubunit enzyme composed of a peripheral complex (V1) that hydrolyzes ATP and a membrane integral complex (V0) that translocates protons. V-ATPase is responsible for acidifying and maintaining the pH of intracellular compartments and in some cell types, is targeted to the plasma membrane, where it is responsible for acidifying the extracellular environment. This Aedes aegypti (Yellowfever mosquito) protein is V-type proton ATPase subunit F.